The chain runs to 259 residues: Short chain dehydrogenase ausX (259 aa).

Positions 13, 59, 121, 153, 157, and 186 each coordinate NADP(+). Residue Y153 is the Proton acceptor of the active site. Residue Y153 is the Proton donor of the active site. K157 (lowers pKa of active site Tyr) is an active-site residue.

The protein belongs to the short-chain dehydrogenases/reductases (SDR) family.

Its pathway is secondary metabolite biosynthesis; terpenoid biosynthesis. In terms of biological role, short chain dehydrogenase; part of the gene cluster A that mediates the biosynthesis of the fungal meroterpenoid acetoxydehydroaustin. The first step of the pathway is the synthesis of 3,5-dimethylorsellinic acid by the polyketide synthase ausA. 3,5-dimethylorsellinic acid is then prenylated by the polyprenyl transferase ausN. Further epoxidation by the FAD-dependent monooxygenase ausM and cyclization by the probable terpene cyclase ausL lead to the formation of protoaustinoid A. Protoaustinoid A is then oxidized to spiro-lactone preaustinoid A3 by the combined action of the FAD-binding monooxygenases ausB and ausC, and the dioxygenase ausE. Acid-catalyzed keto-rearrangement and ring contraction of the tetraketide portion of preaustinoid A3 by ausJ lead to the formation of preaustinoid A4. The aldo-keto reductase ausK, with the help of ausH, is involved in the next step by transforming preaustinoid A4 into isoaustinone which is in turn hydroxylated by the P450 monooxygenase ausI to form austinolide. The cytochrome P450 monooxygenase ausG then modifies austinolide to austinol. Austinol is further acetylated to austin by the O-acetyltransferase ausP, which spontaneously changes to dehydroaustin. The cytochrome P450 monooxygenase then converts dehydroaustin is into 7-dehydrodehydroaustin. The hydroxylation catalyzed by ausR permits the second O-acetyltransferase ausQ to add an additional acetyl group to the molecule, leading to the formation of acetoxydehydroaustin. Due to genetic rearrangements of the clusters and the subsequent loss of some enzymes, the end product of the Penicillium brasilianum austinoid biosynthesis clusters is acetoxydehydroaustin. The chain is Short chain dehydrogenase ausX from Penicillium brasilianum.